Consider the following 611-residue polypeptide: Glutamine--fructose-6-phosphate aminotransferase [isomerizing] (611 aa).

Cysteine 2 serves as the catalytic Nucleophile; for GATase activity. The Glutamine amidotransferase type-2 domain occupies 2-219; sequence CGIVGGVSKT…DGDVAMLQRQ (218 aa). SIS domains follow at residues 287-427 and 460-601; these read AAAM…APGA and WAAR…VDRP. Lysine 606 acts as the For Fru-6P isomerization activity in catalysis.

As to quaternary structure, homodimer.

Its subcellular location is the cytoplasm. The enzyme catalyses D-fructose 6-phosphate + L-glutamine = D-glucosamine 6-phosphate + L-glutamate. Functionally, catalyzes the first step in hexosamine metabolism, converting fructose-6P into glucosamine-6P using glutamine as a nitrogen source. The protein is Glutamine--fructose-6-phosphate aminotransferase [isomerizing] of Acidithiobacillus ferridurans.